A 663-amino-acid chain; its full sequence is LEAF RUST 10 DISEASE-RESISTANCE LOCUS RECEPTOR-LIKE PROTEIN KINASE-like 1.4 (663 aa).

A signal peptide spans 1–25 (MYYPLSSSLMFFILFSLFYHLPCES). Over 26-241 (SKCESLFQCG…TSLSIGAKAG (216 aa)) the chain is Extracellular. N-linked (GlcNAc...) asparagine glycans are attached at residues Asn-36, Asn-64, Asn-106, Asn-137, and Asn-208. Residues 242–262 (IAVASVSGLAILLLAGLFLCI) form a helical membrane-spanning segment. Over 263–663 (RRRRKTQDAQ…TSSSDTAASL (401 aa)) the chain is Cytoplasmic. The interval 282–304 (SYSSRDTSRNPTSTTISSSSNHS) is disordered. Residues 290 to 304 (RNPTSTTISSSSNHS) are compositionally biased toward low complexity. A Protein kinase domain is found at 334–609 (ENFSRELGDG…DEIVEILRGI (276 aa)). ATP-binding positions include 340–348 (LGDGGFGTV) and Lys-362. The Proton acceptor role is filled by Asp-458. The segment at 637-663 (LLRNSVPPPISPETDKWTSSSDTAASL) is disordered. Residues 653-663 (WTSSSDTAASL) are compositionally biased toward polar residues.

It belongs to the protein kinase superfamily. Ser/Thr protein kinase family.

The protein resides in the cell membrane. The catalysed reaction is L-seryl-[protein] + ATP = O-phospho-L-seryl-[protein] + ADP + H(+). It catalyses the reaction L-threonyl-[protein] + ATP = O-phospho-L-threonyl-[protein] + ADP + H(+). The polypeptide is LEAF RUST 10 DISEASE-RESISTANCE LOCUS RECEPTOR-LIKE PROTEIN KINASE-like 1.4 (Arabidopsis thaliana (Mouse-ear cress)).